The primary structure comprises 185 residues: Protein TIFY 5 (185 aa).

The Tify domain maps to 38–72 (AAEARRNLTIFYNGRMCAVNVTELQARTIISMASQ). Residues 77–185 (KQQQQQIQGR…RAAAPLYARR (109 aa)) form a disordered region. The span at 137 to 157 (PRAGLQAAAAAAPTMNQPPAA) shows a compositional bias: low complexity. A Jas motif is present at residues 155–182 (PAASGLSMKRSLQRFLEKRKTRAAAPLY). The Nuclear localization signal motif lies at 162-169 (MKRSLQRF).

This sequence belongs to the TIFY/JAZ family. Ubiquitinated. Targeted for degradation by the SCF(COI1) E3 ubiquitin ligase-proteasome pathway during jasmonate signaling.

Its subcellular location is the nucleus. Functionally, repressor of jasmonate responses. This chain is Protein TIFY 5, found in Oryza sativa subsp. indica (Rice).